The primary structure comprises 246 residues: UDP-N-acetyl-D-mannosaminuronic acid transferase (246 aa).

The protein belongs to the glycosyltransferase 26 family.

It carries out the reaction UDP-N-acetyl-alpha-D-mannosaminouronate + N-acetyl-alpha-D-glucosaminyl-di-trans,octa-cis-undecaprenyl diphosphate = beta-D-ManNAcA-(1-&gt;4)-alpha-D-GlcNAc-di-trans,octa-cis-undecaprenyl diphosphate + UDP + H(+). It functions in the pathway bacterial outer membrane biogenesis; enterobacterial common antigen biosynthesis. In terms of biological role, catalyzes the synthesis of Und-PP-GlcNAc-ManNAcA (Lipid II), the second lipid-linked intermediate involved in enterobacterial common antigen (ECA) synthesis. The sequence is that of UDP-N-acetyl-D-mannosaminuronic acid transferase from Yersinia pestis bv. Antiqua (strain Antiqua).